The primary structure comprises 189 residues: MANLKLLLVGIGNPGPKYAYNRHNIGFVILDSLLNSSSASYQTNSKYSLARTDEEGVTIFYLKPLEFMNLSGKAVAEIAKKNGISPENILVIHDEIDFEFGKLKLKEGGGHAGHNGLRNIVEKLGTNTFFRLRFGVGKPSTASEVSDYVLSNFFPEEKEKIPELVQVSLQKIYDWVRERKNEFQKPSDI.

Tyr18 serves as a coordination point for tRNA. His23 (proton acceptor) is an active-site residue. Residues Phe67, Asn69, and Asn115 each contribute to the tRNA site.

Belongs to the PTH family. As to quaternary structure, monomer.

The protein localises to the cytoplasm. The catalysed reaction is an N-acyl-L-alpha-aminoacyl-tRNA + H2O = an N-acyl-L-amino acid + a tRNA + H(+). Functionally, hydrolyzes ribosome-free peptidyl-tRNAs (with 1 or more amino acids incorporated), which drop off the ribosome during protein synthesis, or as a result of ribosome stalling. Catalyzes the release of premature peptidyl moieties from peptidyl-tRNA molecules trapped in stalled 50S ribosomal subunits, and thus maintains levels of free tRNAs and 50S ribosomes. This is Peptidyl-tRNA hydrolase from Leptospira borgpetersenii serovar Hardjo-bovis (strain JB197).